The sequence spans 127 residues: Small ribosomal subunit protein uS11 (127 aa).

The protein belongs to the universal ribosomal protein uS11 family. As to quaternary structure, part of the 30S ribosomal subunit. Interacts with proteins S7 and S18. Binds to IF-3.

Located on the platform of the 30S subunit, it bridges several disparate RNA helices of the 16S rRNA. Forms part of the Shine-Dalgarno cleft in the 70S ribosome. In Streptococcus gordonii (strain Challis / ATCC 35105 / BCRC 15272 / CH1 / DL1 / V288), this protein is Small ribosomal subunit protein uS11.